Here is a 508-residue protein sequence, read N- to C-terminus: Light-independent protochlorophyllide reductase subunit B (508 aa).

Residue D36 participates in [4Fe-4S] cluster binding. The active-site Proton donor is the D294. 429–430 (GM) is a substrate binding site.

Belongs to the ChlB/BchB/BchZ family. As to quaternary structure, protochlorophyllide reductase is composed of three subunits; ChlL, ChlN and ChlB. Forms a heterotetramer of two ChlB and two ChlN subunits. [4Fe-4S] cluster is required as a cofactor.

The protein resides in the plastid. It localises to the chloroplast. The enzyme catalyses chlorophyllide a + oxidized 2[4Fe-4S]-[ferredoxin] + 2 ADP + 2 phosphate = protochlorophyllide a + reduced 2[4Fe-4S]-[ferredoxin] + 2 ATP + 2 H2O. It participates in porphyrin-containing compound metabolism; chlorophyll biosynthesis (light-independent). In terms of biological role, component of the dark-operative protochlorophyllide reductase (DPOR) that uses Mg-ATP and reduced ferredoxin to reduce ring D of protochlorophyllide (Pchlide) to form chlorophyllide a (Chlide). This reaction is light-independent. The NB-protein (ChlN-ChlB) is the catalytic component of the complex. The sequence is that of Light-independent protochlorophyllide reductase subunit B from Pyropia yezoensis (Susabi-nori).